A 149-amino-acid polypeptide reads, in one-letter code: SsrA-binding protein (149 aa).

It belongs to the SmpB family.

The protein resides in the cytoplasm. Functionally, required for rescue of stalled ribosomes mediated by trans-translation. Binds to transfer-messenger RNA (tmRNA), required for stable association of tmRNA with ribosomes. tmRNA and SmpB together mimic tRNA shape, replacing the anticodon stem-loop with SmpB. tmRNA is encoded by the ssrA gene; the 2 termini fold to resemble tRNA(Ala) and it encodes a 'tag peptide', a short internal open reading frame. During trans-translation Ala-aminoacylated tmRNA acts like a tRNA, entering the A-site of stalled ribosomes, displacing the stalled mRNA. The ribosome then switches to translate the ORF on the tmRNA; the nascent peptide is terminated with the 'tag peptide' encoded by the tmRNA and targeted for degradation. The ribosome is freed to recommence translation, which seems to be the essential function of trans-translation. In Wolbachia sp. subsp. Brugia malayi (strain TRS), this protein is SsrA-binding protein.